The primary structure comprises 318 residues: Isoflavone reductase (318 aa).

Residues 11-17 (GPTGAIG), Arg-36, and Lys-44 each bind NADP(+). Lys-144 serves as the catalytic Proton acceptor. Residue Arg-148 participates in NADP(+) binding.

This sequence belongs to the NmrA-type oxidoreductase family. Isoflavone reductase subfamily.

The enzyme catalyses (3R)-vestitone + NADP(+) = 2'-hydroxyformononetin + NADPH + 2 H(+). It participates in phytoalexin biosynthesis; pterocarpan phytoalexin biosynthesis. In terms of biological role, reduces achiral isoflavones to chiral isoflavanones during the biosynthesis of chiral pterocarpan phytoalexins. The protein is Isoflavone reductase (IFR) of Cicer arietinum (Chickpea).